Consider the following 379-residue polypeptide: Odorant receptor 33b (379 aa).

Residues M1 to D37 lie on the Cytoplasmic side of the membrane. Residues L38–M58 traverse the membrane as a helical segment. Residues E59–D64 lie on the Extracellular side of the membrane. A helical transmembrane segment spans residues V65–F85. At R86 to S129 the chain is on the cytoplasmic side. A helical membrane pass occupies residues F130–G150. Residues H151–A165 are Extracellular-facing. The chain crosses the membrane as a helical span at residues T166–L186. The Cytoplasmic portion of the chain corresponds to Q187–Q256. The helical transmembrane segment at L257–F277 threads the bilayer. Residues A278–N281 are Extracellular-facing. Residues F282–C302 traverse the membrane as a helical segment. The Cytoplasmic portion of the chain corresponds to Y303–G355. The chain crosses the membrane as a helical span at residues I356–M376. Residues S377–R379 are Extracellular-facing.

Belongs to the insect chemoreceptor superfamily. Heteromeric odorant receptor channel (TC 1.A.69) family. Or2a subfamily. In terms of assembly, interacts with Orco. Complexes exist early in the endomembrane system in olfactory sensory neurons (OSNs), coupling these complexes to the conserved ciliary trafficking pathway. In terms of tissue distribution, expressed in 15 cells in the antenna but not the maxillary palp.

Its subcellular location is the cell membrane. Its function is as follows. Odorant receptor which mediates acceptance or avoidance behavior, depending on its substrates. The odorant receptor repertoire encodes a large collection of odor stimuli that vary widely in identity, intensity, and duration. May form a complex with Orco to form odorant-sensing units, providing sensitive and prolonged odorant signaling and calcium permeability. Involved in the behavioral responses to pentyl acetate and pyrazines. The polypeptide is Odorant receptor 33b (Or33b) (Drosophila melanogaster (Fruit fly)).